The following is a 578-amino-acid chain: Palmitoyltransferase ZDHHC1 (578 aa).

At 1–41 (MDVCSKNSNRTAPVSEGGIRRADVPLCSRTNGWSWPPHPFQ) the chain is on the cytoplasmic side. A helical membrane pass occupies residues 42–62 (FLAWLLYLYFAVTGFGVFVPL). Over 63–71 (LPTHWIPAG) the chain is Lumenal. A helical membrane pass occupies residues 72 to 92 (YICTGITFVCHLFMHLMAVSI). The Cytoplasmic segment spans residues 93-174 (DPADYNVRAK…YWLFLNSVIS (82 aa)). In terms of domain architecture, DHHC spans 121-173 (ENCHCYLCEVDVGPKSKHCSACNKCVASFDHHCRWLNNCVGSRNYWLFLNSVI). Cysteine 153 (S-palmitoyl cysteine intermediate) is an active-site residue. A helical membrane pass occupies residues 175–195 (ALLGIVLVVVIASYVFIEFFL). Residues 196–230 (DPSKLRSDKHFQQVRNESVVWFVFLPVAPVTTAGP) lie on the Lumenal side of the membrane. Residues 231-251 (AIPALAGVTIALGLLSALLLG) form a helical membrane-spanning segment. The Cytoplasmic portion of the chain corresponds to 252 to 578 (HLLCFHIYLM…PSSRVGTSLA (327 aa)). Residues 278–288 (QEAGDSRKPPP) show a composition bias toward basic and acidic residues. Disordered regions lie at residues 278 to 298 (QEAGDSRKPPPENDSGVPKLN), 345 to 376 (HMDEEEHLPSVLTEQKASPHPHKHAQKKKRKV), 497 to 517 (SAAGHAAPSPQPRTKRKTAAR), and 532 to 578 (SMFM…TSLA). Over residues 363–376 (PHPHKHAQKKKRKV) the composition is skewed to basic residues. Residues 552–561 (AAKRKQTGKK) show a composition bias toward basic residues.

This sequence belongs to the DHHC palmitoyltransferase family.

It is found in the endosome membrane. It localises to the endoplasmic reticulum membrane. Its subcellular location is the golgi apparatus. The enzyme catalyses L-cysteinyl-[protein] + hexadecanoyl-CoA = S-hexadecanoyl-L-cysteinyl-[protein] + CoA. Palmitoyltransferase that catalyzes the addition of palmitate onto various protein substrates, such as ncdn and nlrp3. This Danio rerio (Zebrafish) protein is Palmitoyltransferase ZDHHC1.